Here is a 76-residue protein sequence, read N- to C-terminus: Adipogenesis regulatory factor (76 aa).

Expressed in adipose tissue (at protein level). Highly expressed in omental and subcutaneous adipose tissues. Expressed in heart, cornea, liver, kidney and spleen.

It is found in the nucleus. Plays a role in fat cell development; promotes adipogenic differentiation and stimulates transcription initiation of master adipogenesis factors like PPARG and CEBPA at early stages of preadipocyte differentiation. Its overexpression confers resistance to the anticancer chemotherapeutic drug cisplatin. The sequence is that of Adipogenesis regulatory factor (ADIRF) from Homo sapiens (Human).